We begin with the raw amino-acid sequence, 425 residues long: tRNA(Ile)-lysidine synthase (425 aa).

27–32 (SGGLDS) provides a ligand contact to ATP.

It belongs to the tRNA(Ile)-lysidine synthase family.

The protein localises to the cytoplasm. The catalysed reaction is cytidine(34) in tRNA(Ile2) + L-lysine + ATP = lysidine(34) in tRNA(Ile2) + AMP + diphosphate + H(+). Ligates lysine onto the cytidine present at position 34 of the AUA codon-specific tRNA(Ile) that contains the anticodon CAU, in an ATP-dependent manner. Cytidine is converted to lysidine, thus changing the amino acid specificity of the tRNA from methionine to isoleucine. The protein is tRNA(Ile)-lysidine synthase of Streptococcus pneumoniae serotype 2 (strain D39 / NCTC 7466).